The chain runs to 119 residues: MARVKSGKITHARHKKVLDAAKGYYGNRSRNFRTATQAVDKANQYATRDRKTRKRNFRALWIQRINAAVRAVDAEMTYSRFIAALAKAGIEVDRKVLADLAVHEPEAFAAVVAQAKAAA.

This sequence belongs to the bacterial ribosomal protein bL20 family.

Binds directly to 23S ribosomal RNA and is necessary for the in vitro assembly process of the 50S ribosomal subunit. It is not involved in the protein synthesizing functions of that subunit. The sequence is that of Large ribosomal subunit protein bL20 from Paracoccus denitrificans (strain Pd 1222).